We begin with the raw amino-acid sequence, 42 residues long: Photosystem I reaction center subunit IX (42 aa).

A helical transmembrane segment spans residues 7-27 (YLSTAPVLATIWFIILAGLLI).

Belongs to the PsaJ family.

The protein localises to the plastid. It localises to the chloroplast thylakoid membrane. May help in the organization of the PsaE and PsaF subunits. The polypeptide is Photosystem I reaction center subunit IX (Mesostigma viride (Green alga)).